Reading from the N-terminus, the 729-residue chain is Polyribonucleotide nucleotidyltransferase (729 aa).

Residues D485 and D491 each coordinate Mg(2+). Residues 552–611 form the KH domain; that stretch reads PRITTMKVAEDKIRTIIGKGGATIKGLIESTGVSIDIDDSGVIQLFSPDKMALEEAQKQI. Positions 621 to 689 constitute an S1 motif domain; the sequence is GQTYQGKVSK…KQGRVKLEWK (69 aa).

Belongs to the polyribonucleotide nucleotidyltransferase family. Component of the RNA degradosome, which is a multiprotein complex involved in RNA processing and mRNA degradation. Mg(2+) serves as cofactor.

The protein localises to the cytoplasm. The catalysed reaction is RNA(n+1) + phosphate = RNA(n) + a ribonucleoside 5'-diphosphate. Functionally, involved in mRNA degradation. Catalyzes the phosphorolysis of single-stranded polyribonucleotides processively in the 3'- to 5'-direction. This is Polyribonucleotide nucleotidyltransferase from Legionella pneumophila (strain Corby).